A 73-amino-acid chain; its full sequence is Conotoxin Cl9.2 (73 aa).

The first 18 residues, 1-18 (MSKLVILAVLVLLPLVTA), serve as a signal peptide directing secretion. The propeptide occupies 19-41 (EHGRDEQAMQPEKKTMWTLWSLT). 3 disulfide bridges follow: Cys46/Cys61, Cys52/Cys63, and Cys58/Cys72.

In terms of tissue distribution, expressed by the venom duct.

Its subcellular location is the secreted. This chain is Conotoxin Cl9.2, found in Californiconus californicus (California cone).